Consider the following 145-residue polypeptide: D-aminoacyl-tRNA deacylase (145 aa).

The short motif at 137 to 138 (GP) is the Gly-cisPro motif, important for rejection of L-amino acids element.

It belongs to the DTD family. In terms of assembly, homodimer.

The protein localises to the cytoplasm. The catalysed reaction is glycyl-tRNA(Ala) + H2O = tRNA(Ala) + glycine + H(+). The enzyme catalyses a D-aminoacyl-tRNA + H2O = a tRNA + a D-alpha-amino acid + H(+). Functionally, an aminoacyl-tRNA editing enzyme that deacylates mischarged D-aminoacyl-tRNAs. Also deacylates mischarged glycyl-tRNA(Ala), protecting cells against glycine mischarging by AlaRS. Acts via tRNA-based rather than protein-based catalysis; rejects L-amino acids rather than detecting D-amino acids in the active site. By recycling D-aminoacyl-tRNA to D-amino acids and free tRNA molecules, this enzyme counteracts the toxicity associated with the formation of D-aminoacyl-tRNA entities in vivo and helps enforce protein L-homochirality. The chain is D-aminoacyl-tRNA deacylase from Shewanella putrefaciens (strain CN-32 / ATCC BAA-453).